Reading from the N-terminus, the 1079-residue chain is Ubiquitin carboxyl-terminal hydrolase 26 (1079 aa).

Over residues 1–12 the composition is skewed to basic residues; sequence MSRPNTRNKSKR. The disordered stretch occupies residues 1–21; sequence MSRPNTRNKSKRPRADDCESP. Residues 106–446 form the USP domain; it reads AGLTNLGATC…DAYMLMYKRI (341 aa). Catalysis depends on C115, which acts as the Nucleophile. H359 functions as the Proton acceptor in the catalytic mechanism. A disordered region spans residues 384–419; the sequence is GLHPFGEKPGKSSDKTDQKPQGSSTADSVTNDDNNS. Positions 388 to 401 are enriched in basic and acidic residues; that stretch reads FGEKPGKSSDKTDQ. The span at 402-417 shows a compositional bias: polar residues; sequence KPQGSSTADSVTNDDN. DUSP domains follow at residues 495–598, 613–715, and 738–862; these read AYIT…DDFC, DVYR…FPSD, and AVKL…AEIV. The disordered stretch occupies residues 948–972; the sequence is EASAAVPVPDRRTSKRSRRTTSGNS. Residues 961–1037 form the Ubiquitin-like domain; it reads SKRSRRTTSG…LWVKDSEIYE (77 aa).

The protein belongs to the peptidase C19 family.

Its subcellular location is the nucleus. It carries out the reaction Thiol-dependent hydrolysis of ester, thioester, amide, peptide and isopeptide bonds formed by the C-terminal Gly of ubiquitin (a 76-residue protein attached to proteins as an intracellular targeting signal).. Recognizes and hydrolyzes the peptide bond at the C-terminal Gly of ubiquitin. Involved in the processing of poly-ubiquitin precursors as well as that of ubiquitinated proteins. Deubiquitinates H2BK143ub1 of histone H2B. This is Ubiquitin carboxyl-terminal hydrolase 26 (UBP26) from Oryza sativa subsp. japonica (Rice).